A 320-amino-acid polypeptide reads, in one-letter code: Zinc finger protein-like 1 (320 aa).

The B box-type; degenerate zinc finger occupies 1 to 43 (MGLCKCPKRKVTNLFCFEHRVNVCEHCLVANHAKCIVQSYLQW). The Cytoplasmic portion of the chain corresponds to 1–274 (MGLCKCPKRK…KSRPASSMQR (274 aa)). An RING-type; degenerate zinc finger spans residues 53–101 (CRLCNTLLSSKETARLVCYDLFHWSCLNDLATQQPPNTAPAGYRCPSCQ). Residues 275 to 295 (FLVILIIGVLGFLTLILLMSK) form a helical membrane-spanning segment. Residues 296 to 320 (LGRASADNDPNLDPLLNPHIHVGKE) are Lumenal-facing.

Belongs to the ZFPL1 family.

It is found in the golgi apparatus. The protein resides in the cis-Golgi network membrane. Required for cis-Golgi integrity and efficient ER to Golgi transport. The chain is Zinc finger protein-like 1 (zfpl1) from Xenopus laevis (African clawed frog).